The following is a 265-amino-acid chain: HUWE1-associated protein modifying stress responses (265 aa).

Disordered stretches follow at residues 1 to 22, 140 to 173, and 194 to 219; these read MEEK…HWFS, GKAP…SVET, and ISMR…RRNG. Low complexity predominate over residues 147-172; it reads SSRAPPRLAMVSPSRSTPSETSSSVE.

The protein belongs to the HAPSTR1 family. Oligomer.

Its subcellular location is the nucleus. The protein resides in the cytoplasm. Its function is as follows. Acts as a central player within a network of stress response pathways promoting cellular adaptability. Functions as a negative regulator of TP53/P53 in the cellular response to telomere erosion and probably also DNA damage. This is HUWE1-associated protein modifying stress responses from Danio rerio (Zebrafish).